Reading from the N-terminus, the 473-residue chain is Chromosomal replication initiator protein DnaA (473 aa).

The interval 1 to 90 (MSSSLWLQCL…KRVTAPKSET (90 aa)) is domain I, interacts with DnaA modulators. The tract at residues 91–136 (IAPARTRTAADVAAESSAPAQLQARKPVHNIWRDEEPVAVDLNHRS) is domain II. A domain III, AAA+ region region spans residues 137–353 (NVNPKHKFNN…GALNRVIANA (217 aa)). The ATP site is built by Gly-181, Gly-183, Lys-184, and Thr-185. The domain IV, binds dsDNA stretch occupies residues 354-473 (NFTGRPITID…YSNLIRTLSS (120 aa)).

It belongs to the DnaA family. In terms of assembly, oligomerizes as a right-handed, spiral filament on DNA at oriC.

It localises to the cytoplasm. Functionally, plays an essential role in the initiation and regulation of chromosomal replication. ATP-DnaA binds to the origin of replication (oriC) to initiate formation of the DNA replication initiation complex once per cell cycle. Binds the DnaA box (a 9 base pair repeat at the origin) and separates the double-stranded (ds)DNA. Forms a right-handed helical filament on oriC DNA; dsDNA binds to the exterior of the filament while single-stranded (ss)DNA is stabiized in the filament's interior. The ATP-DnaA-oriC complex binds and stabilizes one strand of the AT-rich DNA unwinding element (DUE), permitting loading of DNA polymerase. After initiation quickly degrades to an ADP-DnaA complex that is not apt for DNA replication. Binds acidic phospholipids. This is Chromosomal replication initiator protein DnaA from Vibrio atlanticus (strain LGP32) (Vibrio splendidus (strain Mel32)).